The sequence spans 681 residues: Potassium-transporting ATPase ATP-binding subunit (681 aa).

The next 4 helical transmembrane spans lie at 30-50 (LLVY…FFGI), 59-79 (LAIA…EAIA), 216-236 (ILLV…LPFT), and 255-275 (IALL…SIGI). D306 serves as the catalytic 4-aspartylphosphate intermediate. Residues D343, E347, 376–383 (FTATTRMS), and K394 contribute to the ATP site. Positions 517 and 521 each coordinate Mg(2+). 3 helical membrane-spanning segments follow: residues 587–607 (FAII…LNLM), 615–635 (AILS…PLSL), and 661–681 (LIAP…LGIV).

The protein belongs to the cation transport ATPase (P-type) (TC 3.A.3) family. Type IA subfamily. In terms of assembly, the system is composed of three essential subunits: KdpA, KdpB and KdpC.

Its subcellular location is the cell membrane. The enzyme catalyses K(+)(out) + ATP + H2O = K(+)(in) + ADP + phosphate + H(+). Functionally, part of the high-affinity ATP-driven potassium transport (or Kdp) system, which catalyzes the hydrolysis of ATP coupled with the electrogenic transport of potassium into the cytoplasm. This subunit is responsible for energy coupling to the transport system and for the release of the potassium ions to the cytoplasm. The protein is Potassium-transporting ATPase ATP-binding subunit of Listeria monocytogenes serotype 4a (strain HCC23).